The chain runs to 130 residues: MARVTVEDCIDKVDNRFDLVLLAAHRARMISSGSQLTVDRDNDKNPVVSLREIADTTISPEDLREELVHSLQKFVEVDEPEPDTVPLIGSAGASVDADDTEVAVERMTEEELLKGLEGLAPPEEQPEEDE.

Disordered stretches follow at residues 79-98 (EPEP…VDAD) and 109-130 (EEEL…EEDE).

It belongs to the RNA polymerase subunit omega family. In terms of assembly, the RNAP catalytic core consists of 2 alpha, 1 beta, 1 beta' and 1 omega subunit. When a sigma factor is associated with the core the holoenzyme is formed, which can initiate transcription.

It catalyses the reaction RNA(n) + a ribonucleoside 5'-triphosphate = RNA(n+1) + diphosphate. Its function is as follows. Promotes RNA polymerase assembly. Latches the N- and C-terminal regions of the beta' subunit thereby facilitating its interaction with the beta and alpha subunits. The polypeptide is DNA-directed RNA polymerase subunit omega (rpoZ) (Bradyrhizobium diazoefficiens (strain JCM 10833 / BCRC 13528 / IAM 13628 / NBRC 14792 / USDA 110)).